Consider the following 430-residue polypeptide: Adenylosuccinate synthetase (430 aa).

Residues 12–18 and 40–42 each bind GTP; these read GDEGKGK and GHT. Asp13 functions as the Proton acceptor in the catalytic mechanism. Asp13 and Gly40 together coordinate Mg(2+). Residues 13-16, 38-41, Thr128, Arg142, Gln223, Thr238, and Arg302 each bind IMP; these read DEGK and NAGH. His41 functions as the Proton donor in the catalytic mechanism. Substrate is bound at residue 298–304; it reads TTTGRPR. Residues Arg304, 330 to 332, and 412 to 414 contribute to the GTP site; these read LLD and SVG.

It belongs to the adenylosuccinate synthetase family. Homodimer. It depends on Mg(2+) as a cofactor.

The protein resides in the cytoplasm. It carries out the reaction IMP + L-aspartate + GTP = N(6)-(1,2-dicarboxyethyl)-AMP + GDP + phosphate + 2 H(+). The protein operates within purine metabolism; AMP biosynthesis via de novo pathway; AMP from IMP: step 1/2. Functionally, plays an important role in the de novo pathway of purine nucleotide biosynthesis. Catalyzes the first committed step in the biosynthesis of AMP from IMP. This is Adenylosuccinate synthetase from Listeria monocytogenes serotype 4a (strain HCC23).